A 563-amino-acid polypeptide reads, in one-letter code: Delta-1-pyrroline-5-carboxylate dehydrogenase, mitochondrial (563 aa).

A mitochondrion-targeting transit peptide spans Met-1–Arg-24. The residue at position 44 (Ser-44) is a Phosphoserine. Residue Lys-52 is modified to N6-acetyllysine. N6-acetyllysine; alternate is present on residues Lys-93, Lys-99, Lys-114, Lys-130, and Lys-175. An N6-succinyllysine; alternate mark is found at Lys-93, Lys-99, Lys-114, Lys-130, and Lys-175. Residues Ser-208, Lys-233, and Gly-286–Thr-290 contribute to the NAD(+) site. Glu-314 functions as the Proton acceptor in the catalytic mechanism. Lys-318 is modified (N6-acetyllysine). Lys-347 carries the N6-succinyllysine modification. Residue Cys-348 is the Nucleophile of the active site. N6-acetyllysine occurs at positions 365 and 376. Lys-395 bears the N6-succinyllysine mark. Residue Glu-447 coordinates NAD(+). At Lys-509 the chain carries N6-acetyllysine; alternate. Position 509 is an N6-succinyllysine; alternate (Lys-509). Residue Ser-513 participates in substrate binding. Position 531 is an N6-acetyllysine (Lys-531).

Belongs to the aldehyde dehydrogenase family. Homodimer.

It localises to the mitochondrion matrix. The catalysed reaction is L-glutamate 5-semialdehyde + NAD(+) + H2O = L-glutamate + NADH + 2 H(+). The protein operates within amino-acid degradation; L-proline degradation into L-glutamate; L-glutamate from L-proline: step 2/2. In terms of biological role, irreversible conversion of delta-1-pyrroline-5-carboxylate (P5C), derived either from proline or ornithine, to glutamate. This is a necessary step in the pathway interconnecting the urea and tricarboxylic acid cycles. The preferred substrate is glutamic gamma-semialdehyde, other substrates include succinic, glutaric and adipic semialdehydes. The sequence is that of Delta-1-pyrroline-5-carboxylate dehydrogenase, mitochondrial (ALDH4A1) from Bos taurus (Bovine).